The primary structure comprises 180 residues: UPF0149 protein XAC3406 (180 aa).

It belongs to the UPF0149 family.

In Xanthomonas axonopodis pv. citri (strain 306), this protein is UPF0149 protein XAC3406.